The following is a 378-amino-acid chain: Integrator complex assembly factor WDR73 (378 aa).

WD repeat units follow at residues 73 to 113 (DFKV…VWQV), 121 to 163 (KAVS…VVDL), 167 to 205 (KTTYTSDVSDSEELSSLQVLDADTFAFCCASGRLGLVDT), 214 to 255 (NRSP…LLDP), 266 to 305 (QCPVSVPSPDPELLRVTWAPGLKNCLAISGFDGTVQVYDA), and 322 to 371 (EPLF…VWDW).

It belongs to the WD repeat WDR73 family. In terms of assembly, interacts with INTS9 and INTS11; the interaction is direct. Part of the multiprotein complex composed of BRAT1, WDR73, as well as integrator complex subunits INTS9 and INTS11. Expressed in kidney and brain. In the kidney, expressed in glomeruli, most probably in podocytes, and in tubules (at protein level). In the brain, expressed in the cerebellum, with high levels in Purkinje cells and their projecting axons, in the deep cerebellar nuclei and in pyramidal neurons of the cerebral cortex (at protein level). In the white matter, mainly present in astrocytes, but not in oligodendrocytes (at protein level). Also highly expressed in endothelial cells of cerebral capillaries (at protein level).

It is found in the cytoplasm. Its subcellular location is the cytoskeleton. The protein localises to the spindle. The protein resides in the spindle pole. It localises to the cleavage furrow. Functionally, component of a multiprotein complex required for the assembly of the RNA endonuclease module of the integrator complex. Associates with INTS9 and INTS11 in the cytoplasm, stabilizing the INTS9-INTS11 heterodimer and blocking the active site of INTS11. BRAT1 then joins the complex and plugs the active site of INTS11, leading to WDR73 release and nuclear import of INTS9 and INTS11. The sequence is that of Integrator complex assembly factor WDR73 from Homo sapiens (Human).